A 218-amino-acid chain; its full sequence is Octanoyltransferase (218 aa).

The 176-residue stretch at 31-206 (REAADEVWLV…QLVKHLDYAE (176 aa)) folds into the BPL/LPL catalytic domain. Residues 70-77 (RGGQVTYH), 137-139 (SLG), and 150-152 (GLA) each bind substrate. Cys-168 serves as the catalytic Acyl-thioester intermediate.

It belongs to the LipB family.

It is found in the cytoplasm. The catalysed reaction is octanoyl-[ACP] + L-lysyl-[protein] = N(6)-octanoyl-L-lysyl-[protein] + holo-[ACP] + H(+). Its pathway is protein modification; protein lipoylation via endogenous pathway; protein N(6)-(lipoyl)lysine from octanoyl-[acyl-carrier-protein]: step 1/2. Its function is as follows. Catalyzes the transfer of endogenously produced octanoic acid from octanoyl-acyl-carrier-protein onto the lipoyl domains of lipoate-dependent enzymes. Lipoyl-ACP can also act as a substrate although octanoyl-ACP is likely to be the physiological substrate. The sequence is that of Octanoyltransferase from Pseudomonas savastanoi pv. phaseolicola (strain 1448A / Race 6) (Pseudomonas syringae pv. phaseolicola (strain 1448A / Race 6)).